The chain runs to 71 residues: Gas vesicle protein A (71 aa).

Residues 12–22 (LAEVIDRILDK) form an alpha helix 1 region. The segment at 26 to 34 (VDAWVRVSL) is beta-strand 1. Residues 35–37 (VGI) are beta turn. Residues 38-46 (ELLAIEARI) form a beta-strand 2 region. Positions 51-70 (VETYLKYAEAVGLTQSAAVP) are alpha helix 2.

The protein belongs to the gas vesicle GvpA family. As to quaternary structure, the gas vesicle shell is 2 nm thick and consists of a single layer of this protein. It forms helical ribs nearly perpendicular to the long axis of the vesicle.

It localises to the gas vesicle shell. Its function is as follows. Gas vesicles are hollow, gas filled proteinaceous nanostructures found in some microorganisms. During planktonic growth they allow positioning of the organism at a favorable depth for light or nutrient acquisition. GvpA forms the protein shell. The chain is Gas vesicle protein A from Microchaete diplosiphon (Fremyella diplosiphon).